A 299-amino-acid chain; its full sequence is Cancer/testis antigen family 47 member B1 (299 aa).

Residues 1 to 10 (MSATGDRHPT) show a composition bias toward basic and acidic residues. 2 disordered regions span residues 1-102 (MSAT…EGNE) and 215-299 (AREP…SKGT). 2 stretches are compositionally biased toward low complexity: residues 20-31 (QEGAQAEAAGAG) and 46-60 (VPAA…PVEG). Over residues 81–101 (AEEDSDIGPATEEEEEEEEGN) the composition is skewed to acidic residues. Residues 215 to 238 (AREPAEEAADEKPPEEAAEEKLTE) are compositionally biased toward basic and acidic residues. Composition is skewed to acidic residues over residues 239–251 (EATE…EPTS) and 268–281 (WDEE…EEEK). A coiled-coil region spans residues 270–298 (EEAQDAAGEEEKEQEKEKDVENKVKNSKG). A compositionally biased stretch (basic and acidic residues) spans 282–293 (EQEKEKDVENKV).

Belongs to the CT47 family.

This is Cancer/testis antigen family 47 member B1 from Homo sapiens (Human).